The sequence spans 449 residues: D-inositol 3-phosphate glycosyltransferase (449 aa).

His43 provides a ligand contact to 1D-myo-inositol 3-phosphate. UDP-N-acetyl-alpha-D-glucosamine-binding positions include 49-50 (QP) and Gly57. 1D-myo-inositol 3-phosphate is bound by residues 54–59 (DAGGMN), Lys112, Tyr145, Thr169, and Arg189. Positions 263, 268, and 324 each coordinate UDP-N-acetyl-alpha-D-glucosamine. The Mg(2+) site is built by Tyr333, Arg334, and Ala336. The UDP-N-acetyl-alpha-D-glucosamine site is built by Glu346 and Glu354. Position 360 (Thr360) interacts with Mg(2+).

It belongs to the glycosyltransferase group 1 family. MshA subfamily. Homodimer.

It catalyses the reaction 1D-myo-inositol 3-phosphate + UDP-N-acetyl-alpha-D-glucosamine = 1D-myo-inositol 2-acetamido-2-deoxy-alpha-D-glucopyranoside 3-phosphate + UDP + H(+). Catalyzes the transfer of a N-acetyl-glucosamine moiety to 1D-myo-inositol 3-phosphate to produce 1D-myo-inositol 2-acetamido-2-deoxy-glucopyranoside 3-phosphate in the mycothiol biosynthesis pathway. This Segniliparus rotundus (strain ATCC BAA-972 / CDC 1076 / CIP 108378 / DSM 44985 / JCM 13578) protein is D-inositol 3-phosphate glycosyltransferase.